The primary structure comprises 430 residues: Adenylosuccinate synthetase (430 aa).

Residues 12-18 (GDEGKGK) and 40-42 (GHT) each bind GTP. Asp-13 functions as the Proton acceptor in the catalytic mechanism. Mg(2+) contacts are provided by Asp-13 and Gly-40. IMP-binding positions include 13–16 (DEGK), 38–41 (NAGH), Thr-128, Arg-142, Gln-223, Thr-238, and Arg-302. Catalysis depends on His-41, which acts as the Proton donor. 298–304 (TTTGRPR) is a substrate binding site. GTP contacts are provided by residues Arg-304, 330–332 (SID), and 412–414 (SVG).

Belongs to the adenylosuccinate synthetase family. As to quaternary structure, homodimer. It depends on Mg(2+) as a cofactor.

It is found in the cytoplasm. The catalysed reaction is IMP + L-aspartate + GTP = N(6)-(1,2-dicarboxyethyl)-AMP + GDP + phosphate + 2 H(+). It functions in the pathway purine metabolism; AMP biosynthesis via de novo pathway; AMP from IMP: step 1/2. Plays an important role in the de novo pathway of purine nucleotide biosynthesis. Catalyzes the first committed step in the biosynthesis of AMP from IMP. The polypeptide is Adenylosuccinate synthetase (Exiguobacterium sibiricum (strain DSM 17290 / CCUG 55495 / CIP 109462 / JCM 13490 / 255-15)).